Reading from the N-terminus, the 236-residue chain is Apoptosis regulator Bcl-2 (236 aa).

Positions 10–30 match the BH4 motif; it reads DNREIVMKYIHYKLSQRGYEW. At threonine 69 the chain carries Phosphothreonine; by MAPK8. A Phosphoserine; by MAPK8 and PKC modification is found at serine 70. Phosphoserine; by MAPK8 is present on serine 84. A BH3 motif is present at residues 90–104; it reads VHLTLRRAGDDFSRR. The short motif at 133–152 is the BH1 element; sequence ELFRDGVNWGRIVAFFEFGG. The short motif at 184-199 is the BH2 element; it reads TWIQDNGGWDAFVELY. The helical transmembrane segment at 209 to 230 threads the bilayer; it reads FSWLSLKALLSLALVGACITLG.

Belongs to the Bcl-2 family. In terms of assembly, forms homodimers, and heterodimers with BAX, BAD, BAK and Bcl-X(L). Heterodimerization with BAX requires intact BH1 and BH2 motifs, and is necessary for anti-apoptotic activity. Component of the complex, at least composed of LRPPRC, BECN1 and BCL2; the interactions prevent BECN1 from forming an autophagy-inducing complex with PIK3C3. Interacts with EI24. Also interacts with APAF1, BBC3, BCL2L1, BNIPL, MRPL41 and TP53BP2. Binding to FKBP8 seems to target BCL2 to the mitochondria and probably interferes with the binding of BCL2 to its targets. Interacts with BAG1 in an ATP-dependent manner. Interacts with RAF1 (the 'Ser-338' and 'Ser-339' phosphorylated form). Interacts (via the BH4 domain) with EGLN3; the interaction prevents the formation of the BAX-BCL2 complex and inhibits the anti-apoptotic activity of BCL2. Interacts with G0S2; this interaction also prevents the formation of the anti-apoptotic BAX-BCL2 complex. Interacts with RTL10/BOP. Interacts with the SCF(FBXO10) complex. Interacts (via the loop between motifs BH4 and BH3) with NLRP1 (via LRR repeats), but not with NLRP2, NLRP3, NLRP4, PYCARD, nor MEFV. Interacts with GIMAP3/IAN4, GIMAP4/IAN1 and GIMAP5/IAN5. Interacts with BCAP31. Interacts with IRF3; the interaction is inhibited by Sendai virus infection. Interacts with BECN1; thereby inhibiting autophagy in non-starvation conditions. Interacts with AMBRA1; thereby inhibiting autophagy. Post-translationally, phosphorylation/dephosphorylation on Ser-70 regulates anti-apoptotic activity. Growth factor-stimulated phosphorylation on Ser-70 by PKC is required for the anti-apoptosis activity and occurs during the G2/M phase of the cell cycle. In the absence of growth factors, BCL2 appears to be phosphorylated by other protein kinases such as ERKs and stress-activated kinases. Phosphorylated by MAPK8/JNK1 at Thr-69, Ser-70 and Ser-84, which stimulates starvation-induced autophagy. Dephosphorylated by protein phosphatase 2A (PP2A). In terms of processing, proteolytically cleaved by caspases during apoptosis. The cleaved protein, lacking the BH4 motif, has pro-apoptotic activity, causes the release of cytochrome c into the cytosol promoting further caspase activity. Monoubiquitinated by PRKN, leading to an increase in its stability. Ubiquitinated by SCF(FBXO10), leading to its degradation by the proteasome.

It is found in the mitochondrion outer membrane. It localises to the nucleus membrane. Its subcellular location is the endoplasmic reticulum membrane. The protein resides in the cytoplasm. In terms of biological role, suppresses apoptosis in a variety of cell systems including factor-dependent lymphohematopoietic and neural cells. Regulates cell death by controlling the mitochondrial membrane permeability. Appears to function in a feedback loop system with caspases. Inhibits caspase activity either by preventing the release of cytochrome c from the mitochondria and/or by binding to the apoptosis-activating factor (APAF-1). Also acts as an inhibitor of autophagy: interacts with BECN1 and AMBRA1 during non-starvation conditions and inhibits their autophagy function. May attenuate inflammation by impairing NLRP1-inflammasome activation, hence CASP1 activation and IL1B release. The chain is Apoptosis regulator Bcl-2 (BCL2) from Canis lupus familiaris (Dog).